A 217-amino-acid polypeptide reads, in one-letter code: Somatotropin (217 aa).

The N-terminal stretch at 1–27 (MATGSHTATLLLAVALLGLPWPQEAGA) is a signal peptide. His-46 lines the Zn(2+) pocket. A disulfide bond links Cys-79 and Cys-190. The residue at position 132 (Ser-132) is a Phosphoserine. Glu-199 is a Zn(2+) binding site. A disulfide bond links Cys-207 and Cys-215.

It belongs to the somatotropin/prolactin family.

Its subcellular location is the secreted. Plays an important role in growth control. Its major role in stimulating body growth is to stimulate the liver and other tissues to secrete IGF1. It stimulates both the differentiation and proliferation of myoblasts. It also stimulates amino acid uptake and protein synthesis in muscle and other tissues. The sequence is that of Somatotropin (GH1) from Xanthonycticebus pygmaeus (Pygmy slow loris).